A 405-amino-acid chain; its full sequence is Amino sugar nitrososynthase DnmZ (405 aa).

The dTDP site is built by Glu117 and Arg332.

Belongs to the acyl-CoA dehydrogenase family. Homotetramer. It depends on FAD as a cofactor.

The protein operates within antibiotic biosynthesis. In terms of biological role, nitrososynthase involved in the biosynthesis of baumycin. Catalyzes the double-oxidation of TDP-L-epi-vancosamine to TDP-L-epi-vancosonitrose. The rapid turnover of TDP-L-epi-vancosamine suggests that this compound, or a closely related analog, is the natural substrate for DnmZ. Can also catalyze the double-oxidation of TDP-L-evernosamine to TDP-L-evernitrosose. The chain is Amino sugar nitrososynthase DnmZ from Streptomyces peucetius.